The following is a 94-amino-acid chain: Defensin-like protein 21 (94 aa).

The first 26 residues, 1 to 26 (MVRTNVVSFVLFAAIVLCIGSIQIDG), serve as a signal peptide directing secretion. Disulfide bonds link Cys-41–Cys-92, Cys-51–Cys-79, Cys-65–Cys-88, and Cys-69–Cys-90.

It belongs to the DEFL family.

The protein resides in the secreted. The chain is Defensin-like protein 21 from Arabidopsis thaliana (Mouse-ear cress).